A 477-amino-acid polypeptide reads, in one-letter code: Glycogen synthase (477 aa).

Residue Lys15 coordinates ADP-alpha-D-glucose.

Belongs to the glycosyltransferase 1 family. Bacterial/plant glycogen synthase subfamily.

It carries out the reaction [(1-&gt;4)-alpha-D-glucosyl](n) + ADP-alpha-D-glucose = [(1-&gt;4)-alpha-D-glucosyl](n+1) + ADP + H(+). The protein operates within glycan biosynthesis; glycogen biosynthesis. Synthesizes alpha-1,4-glucan chains using ADP-glucose. The chain is Glycogen synthase from Streptococcus pneumoniae (strain ATCC 700669 / Spain 23F-1).